The sequence spans 357 residues: GDP-mannose transporter 2 (357 aa).

At 1-33 (MASARNGVSKDELLPVYERRSQRDGDISGSVKS) the chain is on the cytoplasmic side. Residues 34–54 (FASTIGNSASAAVLAYCLSSI) form a helical membrane-spanning segment. Residues 55–68 (SMTLVNKYVVSGAS) lie on the Lumenal side of the membrane. Residues 69 to 89 (WNLSFLYLAMQSFIGTVAILA) traverse the membrane as a helical segment. At 90 to 107 (CKKTGLIQNLALFDLKKA) the chain is on the cytoplasmic side. The chain crosses the membrane as a helical span at residues 108–128 (QTWLPISLLLVGMIYTGNKAL). Position 129 (Gln-129) is a topological domain, lumenal. The helical transmembrane segment at 130–150 (FLSVPVYTIFKNLTIIVIAYG) threads the bilayer. At 151-161 (EVLMVGGGVKP) the chain is on the cytoplasmic side. Residues 162 to 181 (LALLSFGLMVLSSVVAAWAD) traverse the membrane as a helical segment. The Lumenal segment spans residues 182–196 (IQNATTATVGASSDS). Residue Asn-184 is glycosylated (N-linked (GlcNAc...) asparagine). Residues 197 to 217 (TAAALSALNAGYAWMGTNVIF) traverse the membrane as a helical segment. Over 218–236 (SASYALGMRRVIKKTNFDN) the chain is Cytoplasmic. A helical transmembrane segment spans residues 237 to 257 (WDVMFYNNLLSIPILLLASVL). Residues 258 to 277 (AEDWSSENLQRNFPAELRQS) are Lumenal-facing. A helical membrane pass occupies residues 278–298 (LFIGILYSGVAAVFISYCTAW). At 299-306 (CVRATSST) the chain is on the cytoplasmic side. A helical membrane pass occupies residues 307 to 327 (TYAMVGALNKLPLAVAGIVFF). The Lumenal segment spans residues 328–332 (AAPVT). A helical membrane pass occupies residues 333 to 352 (FGSVSAIVLGFISGLVYARA). At 353–357 (KSTGA) the chain is on the cytoplasmic side.

It belongs to the TPT transporter family. SLC35D subfamily. Homooligomer.

It is found in the golgi apparatus membrane. Its subcellular location is the cytoplasmic vesicle membrane. It localises to the endoplasmic reticulum membrane. Its function is as follows. Involved in the import of GDP-mannose from the cytoplasm into the Golgi lumen. This is GDP-mannose transporter 2 (gmt2) from Neosartorya fischeri (strain ATCC 1020 / DSM 3700 / CBS 544.65 / FGSC A1164 / JCM 1740 / NRRL 181 / WB 181) (Aspergillus fischerianus).